A 341-amino-acid polypeptide reads, in one-letter code: Phenylalanine--tRNA ligase alpha subunit (341 aa).

Glutamate 254 is a Mg(2+) binding site.

The protein belongs to the class-II aminoacyl-tRNA synthetase family. Phe-tRNA synthetase alpha subunit type 1 subfamily. Tetramer of two alpha and two beta subunits. Mg(2+) serves as cofactor.

Its subcellular location is the cytoplasm. It carries out the reaction tRNA(Phe) + L-phenylalanine + ATP = L-phenylalanyl-tRNA(Phe) + AMP + diphosphate + H(+). This chain is Phenylalanine--tRNA ligase alpha subunit, found in Chlorobium phaeovibrioides (strain DSM 265 / 1930) (Prosthecochloris vibrioformis (strain DSM 265)).